Here is a 229-residue protein sequence, read N- to C-terminus: Peptidyl-prolyl cis-trans isomerase FKBP17-1, chloroplastic (229 aa).

The transit peptide at 1–63 (MIRCFAWTPL…SISLSIIAVT (63 aa)) directs the protein to the chloroplast. Positions 105-225 (GDQIEIHYYG…VFDIELVSTR (121 aa)) constitute a PPIase FKBP-type domain.

The protein belongs to the FKBP-type PPIase family.

The protein resides in the plastid. The protein localises to the chloroplast thylakoid lumen. It catalyses the reaction [protein]-peptidylproline (omega=180) = [protein]-peptidylproline (omega=0). Its function is as follows. PPIases accelerate the folding of proteins. It catalyzes the cis-trans isomerization of proline imidic peptide bonds in oligopeptides. This Arabidopsis thaliana (Mouse-ear cress) protein is Peptidyl-prolyl cis-trans isomerase FKBP17-1, chloroplastic (FKBP17-1).